The chain runs to 320 residues: Lipoyl synthase (320 aa).

Residues C67, C72, C78, C93, C97, C100, and S307 each coordinate [4Fe-4S] cluster. The region spanning 79 to 296 is the Radical SAM core domain; it reads FNHGTATFMI…GVIAKEIGFT (218 aa).

It belongs to the radical SAM superfamily. Lipoyl synthase family. [4Fe-4S] cluster is required as a cofactor.

The protein localises to the cytoplasm. The enzyme catalyses [[Fe-S] cluster scaffold protein carrying a second [4Fe-4S](2+) cluster] + N(6)-octanoyl-L-lysyl-[protein] + 2 oxidized [2Fe-2S]-[ferredoxin] + 2 S-adenosyl-L-methionine + 4 H(+) = [[Fe-S] cluster scaffold protein] + N(6)-[(R)-dihydrolipoyl]-L-lysyl-[protein] + 4 Fe(3+) + 2 hydrogen sulfide + 2 5'-deoxyadenosine + 2 L-methionine + 2 reduced [2Fe-2S]-[ferredoxin]. Its pathway is protein modification; protein lipoylation via endogenous pathway; protein N(6)-(lipoyl)lysine from octanoyl-[acyl-carrier-protein]: step 2/2. Catalyzes the radical-mediated insertion of two sulfur atoms into the C-6 and C-8 positions of the octanoyl moiety bound to the lipoyl domains of lipoate-dependent enzymes, thereby converting the octanoylated domains into lipoylated derivatives. This Pseudoalteromonas atlantica (strain T6c / ATCC BAA-1087) protein is Lipoyl synthase.